The chain runs to 61 residues: Protein DDR2 (61 aa).

The signal sequence occupies residues 1-22 (MKVSQVFISAISVFGLATSVNA). Asn24 and Asn27 each carry an N-linked (GlcNAc...) asparagine glycan.

It to yeast HOR7.

Functionally, may play an important role in the response of cells to diverse environmental stresses. The polypeptide is Protein DDR2 (DDR2) (Saccharomyces cerevisiae (strain ATCC 204508 / S288c) (Baker's yeast)).